The sequence spans 496 residues: Lysine--tRNA ligase (496 aa).

Mg(2+) is bound by residues glutamate 409 and glutamate 416.

The protein belongs to the class-II aminoacyl-tRNA synthetase family. Homodimer. Mg(2+) is required as a cofactor.

It localises to the cytoplasm. The enzyme catalyses tRNA(Lys) + L-lysine + ATP = L-lysyl-tRNA(Lys) + AMP + diphosphate. In Streptococcus pneumoniae serotype 19F (strain G54), this protein is Lysine--tRNA ligase.